Here is a 293-residue protein sequence, read N- to C-terminus: Movement protein BC1 (293 aa).

The interval Ser207 to Ala228 is disordered. Over residues Ala209–Gly222 the composition is skewed to polar residues.

The protein belongs to the begomovirus movement protein BC1 family. As to quaternary structure, binds to dimeric supercoiled plasmid DNA. In terms of processing, phosphorylated.

The protein resides in the host cell membrane. It is found in the host microsome membrane. It localises to the host endoplasmic reticulum membrane. Functionally, movement protein involved in the cell-to-cell and systemic transport of viral genomic DNA. Begomoviruses use 2 proteins to transport their DNA from cell to cell. The nuclear shuttle protein (NSP) shuttles it between nucleus and cytoplasm and the movement protein (MP) probably transports the DNA-NSP complex to the cell periphery and facilitates further movement across the cell wall. The polypeptide is Movement protein BC1 (Tomato golden mosaic virus (strain Yellow vein) (TGMV)).